A 505-amino-acid polypeptide reads, in one-letter code: AMP phosphorylase (505 aa).

Residues Gly169, 195–200 (SRAITG), and Thr204 contribute to the AMP site. Residue Asp257 is the Proton donor of the active site. Residues Ser265 and Lys289 each contribute to the AMP site.

The protein belongs to the thymidine/pyrimidine-nucleoside phosphorylase family. Type 2 subfamily.

It carries out the reaction AMP + phosphate = alpha-D-ribose 1,5-bisphosphate + adenine. The enzyme catalyses CMP + phosphate = cytosine + alpha-D-ribose 1,5-bisphosphate. The catalysed reaction is UMP + phosphate = alpha-D-ribose 1,5-bisphosphate + uracil. In terms of biological role, catalyzes the conversion of AMP and phosphate to adenine and ribose 1,5-bisphosphate (R15P). Exhibits phosphorylase activity toward CMP and UMP in addition to AMP. Functions in an archaeal AMP degradation pathway, together with R15P isomerase and RubisCO. The chain is AMP phosphorylase from Methanocorpusculum labreanum (strain ATCC 43576 / DSM 4855 / Z).